Consider the following 84-residue polypeptide: uncharacterized protein (84 aa).

Residues 25–45 (ILMTVAGFIIAFAILVFQISF) form a helical membrane-spanning segment.

The protein resides in the membrane. This is an uncharacterized protein from Bacillus anthracis.